The following is a 233-amino-acid chain: uncharacterized protein (233 aa).

The protein belongs to the asfivirus H233R family.

This is an uncharacterized protein from Ornithodoros (relapsing fever ticks).